We begin with the raw amino-acid sequence, 440 residues long: NADH-quinone oxidoreductase subunit D (440 aa).

The protein belongs to the complex I 49 kDa subunit family. NDH-1 is composed of 14 different subunits. Subunits NuoB, C, D, E, F, and G constitute the peripheral sector of the complex.

The protein resides in the cell membrane. It catalyses the reaction a quinone + NADH + 5 H(+)(in) = a quinol + NAD(+) + 4 H(+)(out). In terms of biological role, NDH-1 shuttles electrons from NADH, via FMN and iron-sulfur (Fe-S) centers, to quinones in the respiratory chain. The immediate electron acceptor for the enzyme in this species is believed to be a menaquinone. Couples the redox reaction to proton translocation (for every two electrons transferred, four hydrogen ions are translocated across the cytoplasmic membrane), and thus conserves the redox energy in a proton gradient. This is NADH-quinone oxidoreductase subunit D from Mycobacterium bovis (strain ATCC BAA-935 / AF2122/97).